Here is a 257-residue protein sequence, read N- to C-terminus: UPF0259 membrane protein WIGBR3650 (257 aa).

Helical transmembrane passes span 23-43, 89-109, 122-142, 148-168, 190-210, and 223-243; these read IIFF…IFLP, LSSL…INTI, IILS…ISFL, ALML…PILI, IKTV…ILVI, and VKIF…IYMY.

It belongs to the UPF0259 family.

It is found in the cell membrane. The polypeptide is UPF0259 membrane protein WIGBR3650 (Wigglesworthia glossinidia brevipalpis).